The following is a 418-amino-acid chain: UDP-N-acetylglucosamine 1-carboxyvinyltransferase (418 aa).

A phosphoenolpyruvate-binding site is contributed by 23-24; the sequence is KN. UDP-N-acetyl-alpha-D-glucosamine is bound at residue R93. D117 serves as the catalytic Proton donor. D305 and V327 together coordinate UDP-N-acetyl-alpha-D-glucosamine.

It belongs to the EPSP synthase family. MurA subfamily.

The protein localises to the cytoplasm. It carries out the reaction phosphoenolpyruvate + UDP-N-acetyl-alpha-D-glucosamine = UDP-N-acetyl-3-O-(1-carboxyvinyl)-alpha-D-glucosamine + phosphate. The protein operates within cell wall biogenesis; peptidoglycan biosynthesis. In terms of biological role, cell wall formation. Adds enolpyruvyl to UDP-N-acetylglucosamine. The chain is UDP-N-acetylglucosamine 1-carboxyvinyltransferase from Mycobacterium bovis (strain ATCC BAA-935 / AF2122/97).